Consider the following 419-residue polypeptide: MGTLSAPPCTQRIKWKGLLLTASLLNFWNLPTTAQVTIEAEPTKVSEGKDVLLLVHNLPQNLTGYIWYKGQMRDLYHYITSYVVDGEIIIYGPAYSGRETAYSNASLLIQNVTREDAGSYTLHIIKGDDGTRGVTGRFTFTLHLETPKPSISSSNLNPRETMEAVSLTCDPETPDASYLWWMNGQSLPMTHSLKLSETNRTLFLLGVTKYTAGPYECEIRNPVSASRSDPVTLNLLPKLPKPYITINNLNPRENKDVLNFTCEPKSENYTYIWWLNGQSLPVSPRVKRPIENRILILPSVTRNETGPYQCEIRDRYGGIRSDPVTLNVLYGPDLPRIYPSFTYYRSGEVLYLSCSADSNPPAQYSWTINEKFQLPGQKLFIRHITTKHSGLYVCSVRNSATGKESSKSMTVEVSDWTVP.

An N-terminal signal peptide occupies residues 1–34 (MGTLSAPPCTQRIKWKGLLLTASLLNFWNLPTTA). One can recognise an Ig-like V-type domain in the interval 35–144 (QVTIEAEPTK…TGRFTFTLHL (110 aa)). Residues Asn-61, Asn-104, Asn-111, Asn-199, Asn-259, Asn-268, and Asn-303 are each glycosylated (N-linked (GlcNAc...) asparagine). Ig-like C2-type domains are found at residues 149 to 234 (PSIS…VTLN), 240 to 327 (PKPY…VTLN), and 335 to 410 (PRIY…KSMT). Residues Cys-169 and Cys-217 are joined by a disulfide bond. Disulfide bonds link Cys-262–Cys-310 and Cys-354–Cys-394.

Belongs to the immunoglobulin superfamily. CEA family.

Its subcellular location is the secreted. The protein is Pregnancy-specific beta-1-glycoprotein 1 (PSG1) of Homo sapiens (Human).